Reading from the N-terminus, the 279-residue chain is Thioredoxin-like 1-2, chloroplastic (279 aa).

A chloroplast-targeting transit peptide spans 1–34 (MAATAAQAVAVKGSVAVPPCGSRGRRRGAVASVR). One can recognise a Thioredoxin domain in the interval 61–203 (PRRSRPVPRN…FRDALAKHKP (143 aa)). Residues Cys126 and Cys129 each act as nucleophile in the active site. A disulfide bond links Cys126 and Cys129. The segment at 242–279 (GDAAAAQELDRGSTKLSPPAKPLVKQGSEERSLVSSGR) is disordered.

The protein belongs to the thioredoxin family.

It localises to the plastid. The protein localises to the chloroplast. Its function is as follows. Probable thiol-disulfide oxidoreductase that may participate in various redox reactions. The chain is Thioredoxin-like 1-2, chloroplastic from Oryza sativa subsp. japonica (Rice).